Consider the following 101-residue polypeptide: Ubiquitin-related modifier 1 homolog (101 aa).

Gly101 is subject to 1-thioglycine. Gly101 participates in a covalent cross-link: Glycyl lysine isopeptide (Gly-Lys) (interchain with K-? in acceptor proteins).

Belongs to the URM1 family. As to quaternary structure, interacts with cer. Post-translationally, C-terminal thiocarboxylation occurs in 2 steps, it is first acyl-adenylated (-COAMP) via the hesA/moeB/thiF part of the MOCS3 homolog, then thiocarboxylated (-COSH) via the rhodanese domain of the MOCS3 homolog.

It localises to the cytoplasm. It participates in tRNA modification; 5-methoxycarbonylmethyl-2-thiouridine-tRNA biosynthesis. In terms of biological role, acts as a sulfur carrier required for 2-thiolation of mcm(5)S(2)U at tRNA wobble positions of cytosolic tRNA(Lys), tRNA(Glu) and tRNA(Gln). Serves as sulfur donor in tRNA 2-thiolation reaction by being thiocarboxylated (-COSH) at its C-terminus by MOCS3. The sulfur is then transferred to tRNA to form 2-thiolation of mcm(5)S(2)U. Also acts as a ubiquitin-like protein (UBL) that is covalently conjugated via an isopeptide bond to lysine residues of target proteins such as Prx2/Jafrac1, Ciao1, Eip71CD and GILT1. The thiocarboxylated form serves as substrate for conjugation and oxidative stress specifically induces the formation of UBL-protein conjugates. This Drosophila ananassae (Fruit fly) protein is Ubiquitin-related modifier 1 homolog.